The following is a 160-amino-acid chain: MGIEGVLKKGFITTSADTVLNYMRTGSLWPVTFGLACCAVEMMHAGMARYDLDRFGIIFRPSPRQADLMIVAGTLTNKMAPALRRVYDQLAEPRWVLSMGSCANGGGYYHYSYSVVRGADRVVPVDVYVPGCPPTAEALIYGLIQLQQKIKRTSTIARDE.

Cysteine 37, cysteine 38, cysteine 102, and cysteine 132 together coordinate [4Fe-4S] cluster.

This sequence belongs to the complex I 20 kDa subunit family. As to quaternary structure, NDH-1 is composed of 14 different subunits. Subunits NuoB, C, D, E, F, and G constitute the peripheral sector of the complex. Requires [4Fe-4S] cluster as cofactor.

Its subcellular location is the cell inner membrane. The catalysed reaction is a quinone + NADH + 5 H(+)(in) = a quinol + NAD(+) + 4 H(+)(out). NDH-1 shuttles electrons from NADH, via FMN and iron-sulfur (Fe-S) centers, to quinones in the respiratory chain. Couples the redox reaction to proton translocation (for every two electrons transferred, four hydrogen ions are translocated across the cytoplasmic membrane), and thus conserves the redox energy in a proton gradient. The sequence is that of NADH-quinone oxidoreductase subunit B from Neisseria gonorrhoeae (strain NCCP11945).